The primary structure comprises 509 residues: MVQEEKAMEAINDALRALRKRHLLEEGAHAPAISALSKPLISQGSEWKEKTEKLETELQQCYKAQSRLSEQLVIEVAESRTSKAILQEKELLINDLQKELTQRREDCTRLQEELEEKTKTVDVLIAENLEIRSQLEEMTSRVQKAETENKMLIDRWMLQKMQDAERLNEANDLYEEMLAKLKANGLETLARQQVDGIVRRNEDGTDHFVESTIPSTCANRIHAHEGGCGSIVFEYNSGTLFTGGQDRAVKMWDTNSGTLIKSLYGSLGNILDMAVTHDNKSVIAATSSNNLFVWDVSSGRVRHTLTGHTDKVCAVDVSKFSSRHVVSAAYDRTIKLWDLHKGYCTNTVLFTSNCNAICLSIDGLTVFSGHMDGNLRLWDIQTGKLLSEVAGHSSAVTSVSLSRNGNRILTSGRDNVHNVFDTRTLEICGTLRASGNRLASNWSRSCISPDDDYVAAGSADGSVHVWSLSKGNIVSILKEQTSPILCCSWSGIGKPLASADKNGYVCTWT.

7 WD repeats span residues 223–262 (AHEGGCGSIVFEYNSGTLFTGGQDRAVKMWDTNSGTLIKS), 265–304 (GSLGNILDMAVTHDNKSVIAATSSNNLFVWDVSSGRVRHT), 307–347 (GHTD…CTNT), 349–388 (LFTSNCNAICLSIDGLTVFSGHMDGNLRLWDIQTGKLLSE), 391–430 (GHSSAVTSVSLSRNGNRILTSGRDNVHNVFDTRTLEICGT), 437–478 (RLAS…SILK), and 480–509 (QTSPILCCSWSGIGKPLASADKNGYVCTWT).

It belongs to the WD repeat ATG16 family.

May play a role in autophagy. The protein is Autophagy-related protein 16 of Arabidopsis thaliana (Mouse-ear cress).